Consider the following 272-residue polypeptide: Alcohol dehydrogenase-related 31 kDa protein (272 aa).

11 to 34 (YVADCGGIALETSKVLMTKNIAKL) is a binding site for NAD(+). Position 139 (Ser-139) interacts with substrate. Catalysis depends on Tyr-152, which acts as the Proton acceptor.

Belongs to the short-chain dehydrogenases/reductases (SDR) family.

This Drosophila melanogaster (Fruit fly) protein is Alcohol dehydrogenase-related 31 kDa protein (Adhr).